The primary structure comprises 200 residues: MSPIFDALVPMVVEQTSRGERSYDIYSRLLKERVIFLTGQVEDHMANLVVAQLLFLESENPDKDIFLYINSPGGSVTAGMSIYDTMQFIKPNVSTVCMGQACSMGAFLLAGGAPGKRYVLPNSRVMIHQPLGGFQGQASDIQIHAQEILTIKNKLNRLLAEHTGQPIEVIERDTDRDNFMSADQAVEYGLVDAVLKHRGE.

Ser103 acts as the Nucleophile in catalysis. His128 is an active-site residue.

Belongs to the peptidase S14 family. As to quaternary structure, fourteen ClpP subunits assemble into 2 heptameric rings which stack back to back to give a disk-like structure with a central cavity, resembling the structure of eukaryotic proteasomes.

The protein resides in the cytoplasm. The enzyme catalyses Hydrolysis of proteins to small peptides in the presence of ATP and magnesium. alpha-casein is the usual test substrate. In the absence of ATP, only oligopeptides shorter than five residues are hydrolyzed (such as succinyl-Leu-Tyr-|-NHMec, and Leu-Tyr-Leu-|-Tyr-Trp, in which cleavage of the -Tyr-|-Leu- and -Tyr-|-Trp bonds also occurs).. In terms of biological role, cleaves peptides in various proteins in a process that requires ATP hydrolysis. Has a chymotrypsin-like activity. Plays a major role in the degradation of misfolded proteins. This Vibrio cholerae serotype O1 (strain ATCC 39541 / Classical Ogawa 395 / O395) protein is ATP-dependent Clp protease proteolytic subunit.